The chain runs to 266 residues: Putative carbamate hydrolase RutD (266 aa).

Belongs to the AB hydrolase superfamily. Hydrolase RutD family.

The catalysed reaction is carbamate + 2 H(+) = NH4(+) + CO2. Functionally, involved in pyrimidine catabolism. May facilitate the hydrolysis of carbamate, a reaction that can also occur spontaneously. The polypeptide is Putative carbamate hydrolase RutD (Acinetobacter baylyi (strain ATCC 33305 / BD413 / ADP1)).